A 404-amino-acid chain; its full sequence is Cysteine desulfurase IscS (404 aa).

Residues 75–76, N155, Q183, and 203–205 each bind pyridoxal 5'-phosphate; these read AT and SAH. K206 carries the N6-(pyridoxal phosphate)lysine modification. T243 is a binding site for pyridoxal 5'-phosphate. The Cysteine persulfide intermediate role is filled by C328. C328 is a [2Fe-2S] cluster binding site.

Belongs to the class-V pyridoxal-phosphate-dependent aminotransferase family. NifS/IscS subfamily. Homodimer. Forms a heterotetramer with IscU, interacts with other sulfur acceptors. Pyridoxal 5'-phosphate serves as cofactor.

Its subcellular location is the cytoplasm. It carries out the reaction (sulfur carrier)-H + L-cysteine = (sulfur carrier)-SH + L-alanine. It participates in cofactor biosynthesis; iron-sulfur cluster biosynthesis. In terms of biological role, master enzyme that delivers sulfur to a number of partners involved in Fe-S cluster assembly, tRNA modification or cofactor biosynthesis. Catalyzes the removal of elemental sulfur atoms from cysteine to produce alanine. Functions as a sulfur delivery protein for Fe-S cluster synthesis onto IscU, an Fe-S scaffold assembly protein, as well as other S acceptor proteins. This Pseudomonas fluorescens (strain ATCC BAA-477 / NRRL B-23932 / Pf-5) protein is Cysteine desulfurase IscS.